A 695-amino-acid polypeptide reads, in one-letter code: MRLAAGALLACAALGLCLAVTEKTVRWCAVNDHEASKCANFRDSMKKVLPEDGPRIICVKKASYLDCIKAIAAHEADAVTLDAGLVHEAGLTPNNLKPVVAEFYGSKENPKTFYYAVALVKKGSNFQLNELQGKKSCHTGLGRSAGWNIPIGLLYCDLPEPRKPLEKAVASFFSGSCVPCADGADFPQLCQLCPGCGCSSVQPYFGYSGAFKCLKDGLGDVAFVKQETIFENLPSKDERDQYELLCLDNTRKPVDEYEQCHLARVPSHAVVARSVDGKEDLIWELLNQAQEHFGKDKSGDFQLFSSPHGKNLLFKDSAYGFFKVPPRMDANLYLGYEYVTAVRNLREGICPDPLQDECKAVKWCALSHHERLKCDEWSVTSGGLIECESAETPEDCIAKIMNGEADAMSLDGGYVYIAGQCGLVPVLAENYESTDCKKAPEEGYLSVAVVKKSNPDINWNNLEGKKSCHTAVDRTAGWNIPMGLLYNRINHCRFDEFFRQGCAPGSQKNSSLCELCVGPSVCAPNNREGYYGYTGAFRCLVEKGDVAFVKSQTVLQNTGGRNSEPWAKDLKEEDFELLCLDGTRKPVSEAHNCHLAKAPNHAVVSRKDKAACVKQKLLDLQVEYGNTVADCSSKFCMFHSKTKDLLFRDDTKCLVDLRGKNTYEKYLGADYIKAVSNLRKCSTSRLLEACTFHKH.

A signal peptide spans 1 to 19 (MRLAAGALLACAALGLCLA). Transferrin-like domains are found at residues 25-347 (VRWC…NLRE) and 361-680 (VKWC…NLRK). Cystine bridges form between cysteine 28-cysteine 67 and cysteine 38-cysteine 58. Arginine 42 is modified (dimethylated arginine). Residues aspartate 82 and tyrosine 114 each coordinate Fe(3+). 17 cysteine pairs are disulfide-bonded: cysteine 137–cysteine 213, cysteine 156–cysteine 350, cysteine 177–cysteine 193, cysteine 180–cysteine 196, cysteine 190–cysteine 198, cysteine 246–cysteine 260, cysteine 358–cysteine 612, cysteine 364–cysteine 396, cysteine 374–cysteine 387, cysteine 421–cysteine 690, cysteine 436–cysteine 653, cysteine 468–cysteine 539, cysteine 492–cysteine 681, cysteine 502–cysteine 516, cysteine 513–cysteine 522, cysteine 579–cysteine 593, and cysteine 631–cysteine 636. The hydrogencarbonate site is built by threonine 139, arginine 143, alanine 145, and glycine 146. Residue tyrosine 207 coordinates Fe(3+). Histidine 268 serves as a coordination point for Fe(3+). Position 389 is a phosphoserine (serine 389). Fe(3+) is bound by residues aspartate 411 and tyrosine 444. Hydrogencarbonate-binding residues include threonine 470, arginine 474, alanine 476, and glycine 477. N-linked (GlcNAc...) asparagine glycosylation is present at asparagine 509. Tyrosine 533 serves as a coordination point for Fe(3+). Histidine 601 is a binding site for Fe(3+). Serine 682 is subject to Phosphoserine.

Belongs to the transferrin family. As to quaternary structure, monomer. Part of a complex composed of SLC40A1/ferroportin, TF/transferrin and HEPH/hephaestin that transfers iron from cells to transferrin. As to expression, expressed by the liver and secreted in plasma.

The protein resides in the secreted. In terms of biological role, transferrins are iron binding transport proteins which can bind two Fe(3+) ions in association with the binding of an anion, usually bicarbonate. It is responsible for the transport of iron from sites of absorption and heme degradation to those of storage and utilization. Serum transferrin may also have a further role in stimulating cell proliferation. This is Serotransferrin (TF) from Oryctolagus cuniculus (Rabbit).